A 284-amino-acid chain; its full sequence is Asialoglycoprotein receptor 1 (284 aa).

Over residues 1-18 (MTKDYQDFQHLDNDNDHH) the composition is skewed to basic and acidic residues. A disordered region spans residues 1-25 (MTKDYQDFQHLDNDNDHHQLRRGPP). Residues 1 to 39 (MTKDYQDFQHLDNDNDHHQLRRGPPPTPRLLQRLCSGSR) lie on the Cytoplasmic side of the membrane. The Endocytosis signal signature appears at 5–8 (YQDF). A lipid anchor (S-palmitoyl cysteine) is attached at cysteine 35. A helical; Signal-anchor for type II membrane protein transmembrane segment spans residues 40–60 (LLLLSSSLSILLLVVVCVITS). A coiled-coil region spans residues 59–117 (TSQNSQLREDLLALRQNFSNLTVSTEDQVKALSTQGSSVGRKMKLVESKLEKQQKDLTE). Residues 61 to 284 (QNSQLREDLL…VCETKLDKAN (224 aa)) lie on the Extracellular side of the membrane. 3 N-linked (GlcNAc...) asparagine glycosylation sites follow: asparagine 75, asparagine 78, and asparagine 146. Cystine bridges form between cysteine 153–cysteine 164, cysteine 181–cysteine 276, and cysteine 254–cysteine 268. A C-type lectin domain is found at 160–277 (YEGSCYWFSS…CRRPYRWVCE (118 aa)). Ca(2+) contacts are provided by valine 190, glutamate 196, aspartate 215, glutamine 239, aspartate 241, glutamate 252, aspartate 253, asparagine 264, aspartate 265, and glutamate 277.

In terms of assembly, interacts with LASS2. In terms of processing, phosphorylated on a cytoplasmic Ser residue. Expressed exclusively in hepatic parenchymal cells.

The protein localises to the membrane. Mediates the endocytosis of plasma glycoproteins to which the terminal sialic acid residue on their complex carbohydrate moieties has been removed. The receptor recognizes terminal galactose and N-acetylgalactosamine units. After ligand binding to the receptor, the resulting complex is internalized and transported to a sorting organelle, where receptor and ligand are disassociated. The receptor then returns to the cell membrane surface. The polypeptide is Asialoglycoprotein receptor 1 (Asgr1) (Mus musculus (Mouse)).